The primary structure comprises 162 residues: Interleukin-15 (162 aa).

An N-terminal signal peptide occupies residues 1-29 (MRILKPYLRSTSIQCYLCLLLNSHFLTEA). A propeptide spanning residues 30-48 (GIHVFILGCISAGLPKTEA) is cleaved from the precursor. 2 disulfides stabilise this stretch: cysteine 83–cysteine 133 and cysteine 90–cysteine 136. N-linked (GlcNAc...) asparagine glycans are attached at residues asparagine 113, asparagine 121, and asparagine 127.

The protein belongs to the IL-15/IL-21 family.

It is found in the secreted. Functionally, cytokine that plays a major role in the development of inflammatory and protective immune responses to microbial invaders and parasites by modulating immune cells of both the innate and adaptive immune systems. Stimulates the proliferation of natural killer cells, T-cells and B-cells and promotes the secretion of several cytokines. In monocytes, induces the production of IL8 and monocyte chemotactic protein 1/CCL2, two chemokines that attract neutrophils and monocytes respectively to sites of infection. Unlike most cytokines, which are secreted in soluble form, IL15 is expressed in association with its high affinity IL15RA on the surface of IL15-producing cells and delivers signals to target cells that express IL2RB and IL2RG receptor subunits. Binding to its receptor triggers the phosphorylation of JAK1 and JAK3 and the recruitment and subsequent phosphorylation of signal transducer and activator of transcription-3/STAT3 and STAT5. In mast cells, induces the rapid tyrosine phosphorylation of STAT6 and thereby controls mast cell survival and release of cytokines such as IL4. This chain is Interleukin-15 (IL15), found in Bubalus bubalis (Domestic water buffalo).